We begin with the raw amino-acid sequence, 181 residues long: ATP-dependent protease subunit HslV (181 aa).

Threonine 7 is a catalytic residue. Na(+)-binding residues include alanine 166, cysteine 169, and threonine 172.

This sequence belongs to the peptidase T1B family. HslV subfamily. In terms of assembly, a double ring-shaped homohexamer of HslV is capped on each side by a ring-shaped HslU homohexamer. The assembly of the HslU/HslV complex is dependent on binding of ATP.

The protein localises to the cytoplasm. The catalysed reaction is ATP-dependent cleavage of peptide bonds with broad specificity.. With respect to regulation, allosterically activated by HslU binding. Its function is as follows. Protease subunit of a proteasome-like degradation complex believed to be a general protein degrading machinery. This chain is ATP-dependent protease subunit HslV, found in Anaeromyxobacter sp. (strain Fw109-5).